Consider the following 406-residue polypeptide: ATP-dependent RNA helicase eIF4A (406 aa).

The Q motif signature appears at 25–53 (DSFDAMDLKPELLRGVYAYGFERPSAIQQ). The Helicase ATP-binding domain maps to 56–226 (ILPIIKGNDV…TKFMRDPVRI (171 aa)). 69-76 (AQSGTGKT) serves as a coordination point for ATP. The short motif at 174–177 (DEAD) is the DEAD box element. Residues 237–398 (GIKQFYIAVE…EMPMNVAGKF (162 aa)) enclose the Helicase C-terminal domain.

It belongs to the DEAD box helicase family. eIF4A subfamily. Component of the eIF4F complex, which composition varies with external and internal environmental conditions. It is composed of at least eIF4A, eIF4E and eIF4G.

It localises to the cytoplasm. The catalysed reaction is ATP + H2O = ADP + phosphate + H(+). Its function is as follows. ATP-dependent RNA helicase which is a subunit of the eIF4F complex involved in cap recognition and is required for mRNA binding to ribosome. In the current model of translation initiation, eIF4A unwinds RNA secondary structures in the 5'-UTR of mRNAs which is necessary to allow efficient binding of the small ribosomal subunit, and subsequent scanning for the initiator codon. This is ATP-dependent RNA helicase eIF4A (tif1) from Aspergillus fumigatus (strain ATCC MYA-4609 / CBS 101355 / FGSC A1100 / Af293) (Neosartorya fumigata).